The sequence spans 776 residues: FT-interacting protein 4 (776 aa).

The segment covering 1–16 (MQRPPPEDFSLKETKP) has biased composition (basic and acidic residues). The disordered stretch occupies residues 1–23 (MQRPPPEDFSLKETKPHLGGGKV). 3 C2 domains span residues 22–142 (KVTG…PQWY), 181–305 (VSGT…SRWF), and 346–474 (YSSD…THSY). Ca(2+)-binding residues include Asp-55, Asp-61, Asp-108, Asp-110, and Asp-115. Transmembrane regions (helical) follow at residues 577-597 (IMGVLSGIIAVGKWFEQICVW), 608-628 (ILFIILVIYPELILPTIFLYL), and 719-739 (LFVLFCLIAAVILYITPFQVV).

The protein belongs to the MCTP family. Interacts with and regulates subcellular localization and trafficking of STM. It depends on Ca(2+) as a cofactor. As to expression, highly expressed in both vegetative and inflorescence shoot apical meristems (SAMs). Accumulates in root meristems. Observed in flowers.

The protein resides in the endoplasmic reticulum membrane. It localises to the cytoplasm. The protein localises to the vesicle. It is found in the cell membrane. Its subcellular location is the endosome membrane. The protein resides in the golgi apparatus membrane. In terms of biological role, required for proliferation and differentiation of shoot stem cells in the shoot apical meristem (SAM), thus determining the appropriate balance between the maintenance of shoot stem cells and their differentiation into other aboveground plant parts via the control of subcellular localization and intercellular trafficking of STM in the shoot apex. Prevents intracellular trafficking of STM to the plasma membrane in cells in the peripheral shoot meristem region thus facilitating STM recycling to the nucleus to maintain stem cells. May function as a signaling molecule by regulating the trafficking of other regulators. This Arabidopsis thaliana (Mouse-ear cress) protein is FT-interacting protein 4.